The following is a 1136-amino-acid chain: Type I inositol polyphosphate 5-phosphatase 13 (1136 aa).

WD repeat units lie at residues Glu147–Cys185, Val205–Asp244, Ala259–Leu297, Glu436–Asn475, and Ser515–Asn552. Catalytic regions lie at residues Asp782–Thr798 and Lys861–Thr876. Lys940 is covalently cross-linked (Glycyl lysine isopeptide (Lys-Gly) (interchain with G-Cter in ubiquitin)). Residues Lys1104–Arg1136 are disordered. A compositionally biased stretch (basic and acidic residues) spans Pro1124–Arg1136.

Belongs to the inositol polyphosphate 5-phosphatase family. As to quaternary structure, interacts with KIN10, but not with PHOT1. Requires Mg(2+) as cofactor. In terms of tissue distribution, expressed in young seedlings and flowers. Highly expressed in anther and pollen grains, but not in pistils. Not detected in maturated roots, stems and rosette leaves.

The protein resides in the nucleus. It catalyses the reaction 1D-myo-inositol 1,4,5-trisphosphate + H2O = 1D-myo-inositol 1,4-bisphosphate + phosphate. Its function is as follows. Converts inositol 1,4,5-trisphosphate (Ins(1,4,5)P3) to inositol 1,4-bisphosphate. Modulates cotyledon vein development through regulating auxin homeostasis. Involved in blue light responses. Decreases the amount of KIN10 degraded by the proteasome under low nutrient conditions. Participates with IP5P12 in the control of Ins(1,4,5)P3/Ca(2+) levels that is crucial for maintaining pollen dormancy and regulating early germination of pollen. May modulate auxin transport by regulating vesicle trafficking and thereby plays a role in root gravitropism. This Arabidopsis thaliana (Mouse-ear cress) protein is Type I inositol polyphosphate 5-phosphatase 13.